We begin with the raw amino-acid sequence, 391 residues long: Terminal nucleotidyltransferase 5C (391 aa).

Belongs to the TENT family. As to quaternary structure, interacts with BCCIP and PABPC1; the interaction has no effect on TENT5C poly(A) polymerase function. Interacts with PLK4; this interaction leads to the TENT5C recruitment into the centrosome. As to expression, expressed by splenocytes, expression is increased in activated splenocytes.

The protein localises to the nucleus. Its subcellular location is the cytoplasm. The protein resides in the cytoskeleton. It is found in the microtubule organizing center. It localises to the centrosome. It carries out the reaction RNA(n) + ATP = RNA(n)-3'-adenine ribonucleotide + diphosphate. In terms of biological role, catalyzes the transfer of one adenosine molecule from an ATP to an mRNA poly(A) tail bearing a 3'-OH terminal group and enhances mRNA stability and gene expression. Can also elongate RNA oligos ending with uridine molecule, provided that the sequence is adenosine-rich. Mainly targets mRNAs encoding endoplasmic reticulum-targeted protein. The chain is Terminal nucleotidyltransferase 5C from Mus musculus (Mouse).